The sequence spans 374 residues: Chaperone protein DnaJ (374 aa).

The J domain occupies 6–70 (DYYDILGVSK…QKRAQYDQFG (65 aa)). Residues 135 to 217 (GKKTTIKYSR…CGGTGHTSQQ (83 aa)) form a CR-type zinc finger. Cys148, Cys151, Cys165, Cys168, Cys191, Cys194, Cys205, and Cys208 together coordinate Zn(2+). CXXCXGXG motif repeat units lie at residues 148–155 (CKTCGGSG), 165–172 (CHKCNGTG), 191–198 (CDVCNGTG), and 205–212 (CPTCGGTG). 2 disordered regions span residues 308 to 328 (GTNF…GTGD) and 347 to 374 (EALK…KFMN).

Belongs to the DnaJ family. In terms of assembly, homodimer. Requires Zn(2+) as cofactor.

The protein resides in the cytoplasm. Its function is as follows. Participates actively in the response to hyperosmotic and heat shock by preventing the aggregation of stress-denatured proteins and by disaggregating proteins, also in an autonomous, DnaK-independent fashion. Unfolded proteins bind initially to DnaJ; upon interaction with the DnaJ-bound protein, DnaK hydrolyzes its bound ATP, resulting in the formation of a stable complex. GrpE releases ADP from DnaK; ATP binding to DnaK triggers the release of the substrate protein, thus completing the reaction cycle. Several rounds of ATP-dependent interactions between DnaJ, DnaK and GrpE are required for fully efficient folding. Also involved, together with DnaK and GrpE, in the DNA replication of plasmids through activation of initiation proteins. This is Chaperone protein DnaJ from Pediococcus pentosaceus (strain ATCC 25745 / CCUG 21536 / LMG 10740 / 183-1w).